The sequence spans 212 residues: Secreted and transmembrane protein 1b (212 aa).

Residues 1–28 form the signal peptide; it reads MLAYSVTSSGLFPRMLWALLLLAASLNA. The Extracellular portion of the chain corresponds to 29 to 160; sequence HNDVWDEPCC…DKPPTAVRTE (132 aa). Cys-38 and Cys-55 are oxidised to a cystine. Residues Asn-56, Asn-85, Asn-114, and Asn-130 are each glycosylated (N-linked (GlcNAc...) asparagine). The chain crosses the membrane as a helical span at residues 161 to 181; it reads VIIIIAIATTIIITGIGVFVW. Residues 182-212 lie on the Cytoplasmic side of the membrane; the sequence is YKQFPVAPQIQMSVPCLIHGSPGIPYLTLPP.

Belongs to the SECTM family. Interacts with CD7.

Its subcellular location is the cell membrane. It localises to the secreted. May be involved in thymocyte signaling. The chain is Secreted and transmembrane protein 1b (Sectm1b) from Mus musculus (Mouse).